Consider the following 501-residue polypeptide: Probable cytosol aminopeptidase (501 aa).

Positions 257 and 262 each coordinate Mn(2+). The active site involves Lys-269. 3 residues coordinate Mn(2+): Asp-281, Asp-341, and Glu-343. Residue Arg-345 is part of the active site.

It belongs to the peptidase M17 family. Requires Mn(2+) as cofactor.

It localises to the cytoplasm. The enzyme catalyses Release of an N-terminal amino acid, Xaa-|-Yaa-, in which Xaa is preferably Leu, but may be other amino acids including Pro although not Arg or Lys, and Yaa may be Pro. Amino acid amides and methyl esters are also readily hydrolyzed, but rates on arylamides are exceedingly low.. The catalysed reaction is Release of an N-terminal amino acid, preferentially leucine, but not glutamic or aspartic acids.. Presumably involved in the processing and regular turnover of intracellular proteins. Catalyzes the removal of unsubstituted N-terminal amino acids from various peptides. The polypeptide is Probable cytosol aminopeptidase (Synechococcus sp. (strain RCC307)).